Here is a 185-residue protein sequence, read N- to C-terminus: Ribosome-recycling factor (185 aa).

It belongs to the RRF family.

Its subcellular location is the cytoplasm. In terms of biological role, responsible for the release of ribosomes from messenger RNA at the termination of protein biosynthesis. May increase the efficiency of translation by recycling ribosomes from one round of translation to another. The polypeptide is Ribosome-recycling factor (Mycobacteroides abscessus (strain ATCC 19977 / DSM 44196 / CCUG 20993 / CIP 104536 / JCM 13569 / NCTC 13031 / TMC 1543 / L948) (Mycobacterium abscessus)).